The chain runs to 67 residues: FQTPPDLCQLPQARGPCKAALLRYFYNSTSNACEPFTYGGCQGNNBNFETTEMCLRICEPPQQTDKS.

The region spanning 8 to 58 (CQLPQARGPCKAALLRYFYNSTSNACEPFTYGGCQGNNBNFETTEMCLRIC) is the BPTI/Kunitz inhibitor domain. Intrachain disulfides connect C8/C58, C17/C41, and C33/C54. The N-linked (GlcNAc...) asparagine glycan is linked to N27.

It localises to the secreted. The sequence is that of Colostrum trypsin inhibitor from Bos taurus (Bovine).